The sequence spans 156 residues: Histidine-containing phosphotransfer protein 2 (156 aa).

Met-1 bears the N-acetylmethionine mark. Positions 40 to 147 constitute an HPt domain; it reads SPDFVSEVLS…NLEKQIIQAG (108 aa). At His-82 the chain carries Phosphohistidine.

As to quaternary structure, interacts with the B-type response regulators ARR1, ARR2 and ARR10. Binds to AHK1, AHK2, AHK3, AHK4, AHK5, ETR1 and CKI1. Two-component system major event consists of a His-to-Asp phosphorelay between a sensor histidine kinase (HK) and a response regulator (RR). In plants, the His-to-Asp phosphorelay involves an additional intermediate named Histidine-containing phosphotransfer protein (HPt). This multistep phosphorelay consists of a His-Asp-His-Asp sequential transfer of a phosphate group between first a His and an Asp of the HK protein, followed by the transfer to a conserved His of the HPt protein and finally the transfer to an Asp in the receiver domain of the RR protein. In terms of tissue distribution, strongly expressed in flowers and roots. Detected also in leaves, siliques and stems.

The protein localises to the cytoplasm. It is found in the cytosol. The protein resides in the nucleus. Functionally, functions as a two-component phosphorelay mediators between cytokinin sensor histidine kinases and response regulator (B-type ARRs). Plays an important role in propagating cytokinin signal transduction through the multistep His-to-Asp phosphorelay. The chain is Histidine-containing phosphotransfer protein 2 (AHP2) from Arabidopsis thaliana (Mouse-ear cress).